A 109-amino-acid chain; its full sequence is Prothymosin alpha (109 aa).

The tract at residues 1–109 (MSDTSVDASV…AKKQKTDDDD (109 aa)) is disordered. The span at 9–35 (SVEKTTKDLKSKDKELVEETENGKDKP) shows a compositional bias: basic and acidic residues. Over residues 41-81 (ENEENGEDGADNEEEEEVDEEDEEDEGEGDDDEGDEDDEAD) the composition is skewed to acidic residues. A compositionally biased stretch (basic and acidic residues) spans 99–109 (DAKKQKTDDDD).

The protein belongs to the pro/parathymosin family. In terms of tissue distribution, highly expressed in the testis.

The protein resides in the nucleus. Its function is as follows. May have role in testicular activity. The sequence is that of Prothymosin alpha from Pelophylax lessonae (Pool frog).